Consider the following 307-residue polypeptide: Probable GTP 3',8-cyclase (307 aa).

The Radical SAM core domain maps to 5–231 (RFGRPVTNLR…MHRRKKYFIP (227 aa)). Residue Arg-14 participates in GTP binding. The [4Fe-4S] cluster site is built by Cys-21, Cys-25, and Cys-28. Lys-62 contributes to the GTP binding site. Gly-66 contacts S-adenosyl-L-methionine. Thr-91 contacts GTP. An S-adenosyl-L-methionine-binding site is contributed by Ser-115. Lys-151 contributes to the GTP binding site. An S-adenosyl-L-methionine-binding site is contributed by Met-190. [4Fe-4S] cluster is bound by residues Cys-251 and Cys-254. 256–258 (RLR) lines the GTP pocket. Cys-268 lines the [4Fe-4S] cluster pocket.

This sequence belongs to the radical SAM superfamily. MoaA family. It depends on [4Fe-4S] cluster as a cofactor.

The catalysed reaction is GTP + AH2 + S-adenosyl-L-methionine = (8S)-3',8-cyclo-7,8-dihydroguanosine 5'-triphosphate + 5'-deoxyadenosine + L-methionine + A + H(+). Its pathway is cofactor biosynthesis; molybdopterin biosynthesis. Catalyzes the cyclization of GTP to (8S)-3',8-cyclo-7,8-dihydroguanosine 5'-triphosphate. The chain is Probable GTP 3',8-cyclase from Thermococcus kodakarensis (strain ATCC BAA-918 / JCM 12380 / KOD1) (Pyrococcus kodakaraensis (strain KOD1)).